We begin with the raw amino-acid sequence, 198 residues long: Nucleoside triphosphate pyrophosphatase 1 (198 aa).

Asp-75 serves as the catalytic Proton acceptor.

It belongs to the Maf family. Requires a divalent metal cation as cofactor.

It is found in the cytoplasm. The catalysed reaction is a ribonucleoside 5'-triphosphate + H2O = a ribonucleoside 5'-phosphate + diphosphate + H(+). It carries out the reaction a 2'-deoxyribonucleoside 5'-triphosphate + H2O = a 2'-deoxyribonucleoside 5'-phosphate + diphosphate + H(+). Its function is as follows. Nucleoside triphosphate pyrophosphatase. May have a dual role in cell division arrest and in preventing the incorporation of modified nucleotides into cellular nucleic acids. The protein is Nucleoside triphosphate pyrophosphatase 1 of Jannaschia sp. (strain CCS1).